Reading from the N-terminus, the 385-residue chain is MPSKNDLLSFRSEINNIDKNIVQLLAKRKKLVLNIAESKIKNNQPIRDIEREKILLEKLTNLGKKNNLNTNYITRLFQLIIEESVLTQKKLLNKFCNDNNLDLASFSFLGPKGSYSHIAASQYAEQNFKTCIENACLSFNEVIQSVENNQTDYAVLPIENSCSGFINEIFDILKKTNLFIIGEINISINHCLLAIKKIELNKIKAVYSHPQPFQQCSYFIKKFPNWKIQYTNSTADAMKKIVKYNITTNAALGSELGSKIYGLKVLYKNLANKKKNITRFILLSRKPVSISSKIPTKTTLIFNTGQESGALAEVLLILKKNKLIMKKLTSQNIYKNPWEEMFYIDVQANLSSSLMQETLEKIGKITKFIKILGCYPSENITPIIP.

One can recognise a Chorismate mutase domain in the interval 1-92 (MPSKNDLLSF…ESVLTQKKLL (92 aa)). Substrate is bound by residues Arg11, Arg28, Lys39, Asp48, Glu52, Ser84, and Gln88. The region spanning 105–285 (SFSFLGPKGS…NITRFILLSR (181 aa)) is the Prephenate dehydratase domain. The tract at residues 286–385 (KPVSISSKIP…PSENITPIIP (100 aa)) is regulatory. The ACT domain occupies 299 to 376 (TLIFNTGQES…KFIKILGCYP (78 aa)).

It localises to the cytoplasm. It catalyses the reaction chorismate = prephenate. The enzyme catalyses prephenate + H(+) = 3-phenylpyruvate + CO2 + H2O. It functions in the pathway amino-acid biosynthesis; L-phenylalanine biosynthesis; phenylpyruvate from prephenate: step 1/1. The protein operates within metabolic intermediate biosynthesis; prephenate biosynthesis; prephenate from chorismate: step 1/1. Its function is as follows. Catalyzes the Claisen rearrangement of chorismate to prephenate and the decarboxylation/dehydration of prephenate to phenylpyruvate. In Buchnera aphidicola subsp. Schizaphis graminum (strain Sg), this protein is Bifunctional chorismate mutase/prephenate dehydratase (pheA).